We begin with the raw amino-acid sequence, 435 residues long: Adenylosuccinate synthetase (435 aa).

Residues 19–25 and 49–51 contribute to the GTP site; these read GDEGKGK and GHT. Catalysis depends on aspartate 20, which acts as the Proton acceptor. Aspartate 20 and glycine 49 together coordinate Mg(2+). IMP contacts are provided by residues 20 to 23, 47 to 50, threonine 139, arginine 153, asparagine 233, threonine 248, and arginine 312; these read DEGK and NAGH. Histidine 50 functions as the Proton donor in the catalytic mechanism. 308-314 contributes to the substrate binding site; it reads VTTGRKR. GTP-binding positions include arginine 314, 340–342, and 422–424; these read KLD and GVG.

It belongs to the adenylosuccinate synthetase family. As to quaternary structure, homodimer. Requires Mg(2+) as cofactor.

Its subcellular location is the cytoplasm. It catalyses the reaction IMP + L-aspartate + GTP = N(6)-(1,2-dicarboxyethyl)-AMP + GDP + phosphate + 2 H(+). It functions in the pathway purine metabolism; AMP biosynthesis via de novo pathway; AMP from IMP: step 1/2. Plays an important role in the de novo pathway and in the salvage pathway of purine nucleotide biosynthesis. Catalyzes the first committed step in the biosynthesis of AMP from IMP. The sequence is that of Adenylosuccinate synthetase from Brugia malayi (Filarial nematode worm).